A 445-amino-acid polypeptide reads, in one-letter code: MAGLEAIKYGRGRLEVLDQLRLPHEFVYDNVSTCEEAFDSIKSMRVRGAPAIAIVAALALAVELHHEKDGSKTKQEAVQYINKRLDYLLGSRPTAVDLSNAIKLLKRVSQSAAEATNALDDSAACADVRKGYIDAAEKILEDDLTTNLAIGRYGAEYLRRQQMPIGGEEDDEDPSKFFTTSPPCTQGAPDRTYRKLSVLTHCNTGSLATSGHGTALGIIRSLHKMNYLDHAYCTETRPYNQGSRLTAFELVYEKIPSTLITDSMAGALFARMKESKNISAVIVGADRVARNGDTANKIGTYSLAVLAKAHNIKFIVAAPTTSIDLETVSGADIKIEDRAPTELTQISGAVVGKDGHVDVNTTARVAIAHQGIDVWNPSFDVTPSMYIDAVITEKGEVVRSSKGTFDFKTIMPERWAQQVEGKELSAETNVKAHVDDGTQFPMENI.

Asp286 serves as the catalytic Proton donor.

Belongs to the eIF-2B alpha/beta/delta subunits family. MtnA subfamily.

It localises to the cytoplasm. The protein resides in the nucleus. The catalysed reaction is 5-(methylsulfanyl)-alpha-D-ribose 1-phosphate = 5-(methylsulfanyl)-D-ribulose 1-phosphate. It participates in amino-acid biosynthesis; L-methionine biosynthesis via salvage pathway; L-methionine from S-methyl-5-thio-alpha-D-ribose 1-phosphate: step 1/6. Catalyzes the interconversion of methylthioribose-1-phosphate (MTR-1-P) into methylthioribulose-1-phosphate (MTRu-1-P). The sequence is that of Methylthioribose-1-phosphate isomerase (mri1) from Sclerotinia sclerotiorum (strain ATCC 18683 / 1980 / Ss-1) (White mold).